Reading from the N-terminus, the 345-residue chain is Probable dual-specificity RNA methyltransferase RlmN (345 aa).

The active-site Proton acceptor is the glutamate 98. The 229-residue stretch at 104–332 (TYKRLTVCVS…VSIRYSRGLE (229 aa)) folds into the Radical SAM core domain. An intrachain disulfide couples cysteine 111 to cysteine 337. [4Fe-4S] cluster contacts are provided by cysteine 118, cysteine 122, and cysteine 125. S-adenosyl-L-methionine contacts are provided by residues 165–166 (GE), serine 195, 218–220 (SLH), and asparagine 294. Cysteine 337 serves as the catalytic S-methylcysteine intermediate.

This sequence belongs to the radical SAM superfamily. RlmN family. Requires [4Fe-4S] cluster as cofactor.

It is found in the cytoplasm. The catalysed reaction is adenosine(2503) in 23S rRNA + 2 reduced [2Fe-2S]-[ferredoxin] + 2 S-adenosyl-L-methionine = 2-methyladenosine(2503) in 23S rRNA + 5'-deoxyadenosine + L-methionine + 2 oxidized [2Fe-2S]-[ferredoxin] + S-adenosyl-L-homocysteine. The enzyme catalyses adenosine(37) in tRNA + 2 reduced [2Fe-2S]-[ferredoxin] + 2 S-adenosyl-L-methionine = 2-methyladenosine(37) in tRNA + 5'-deoxyadenosine + L-methionine + 2 oxidized [2Fe-2S]-[ferredoxin] + S-adenosyl-L-homocysteine. Functionally, specifically methylates position 2 of adenine 2503 in 23S rRNA and position 2 of adenine 37 in tRNAs. This Trichodesmium erythraeum (strain IMS101) protein is Probable dual-specificity RNA methyltransferase RlmN.